A 1233-amino-acid chain; its full sequence is Capping protein-inhibiting regulator of actin dynamics (1233 aa).

S7, S28, and S132 each carry phosphoserine. Disordered regions lie at residues 92 to 136, 157 to 224, and 269 to 527; these read AENK…SAGT, AKHK…RRRQ, and LLEE…WQEV. Positions 157 to 176 are enriched in basic residues; it reads AKHKLAVKPKKQRVSKKHRR. Composition is skewed to basic and acidic residues over residues 200–211, 282–293, 302–322, and 329–362; these read PGEDKPTWHEEE, EAERAPREEQQR, DAER…ERRR, and AEER…KRQE. The interval 321 to 472 is required for interaction with actin-capping proteins; that stretch reads RRLQAQAQAE…EQQGRSGDFQ (152 aa). Composition is skewed to acidic residues over residues 363 to 376 and 397 to 407; these read EEEA…EQQE and EEEDLGEEEEE. Residue S420 is modified to Phosphoserine. Basic and acidic residues-rich tracts occupy residues 432–447 and 505–527; these read DQER…HSEE and VERK…WQEV. The residue at position 556 (S556) is a Phosphoserine. A Phosphothreonine modification is found at T559. Disordered stretches follow at residues 560–586, 629–788, 815–1082, and 1097–1186; these read PAKD…HALP, HAEA…TTEG, EFTT…TEKV, and QKGF…ISDS. A compositionally biased stretch (basic and acidic residues) spans 677–707; it reads KNAESDPRSSERDQLRPGDESTPRGRCDSRG. Polar residues predominate over residues 732–742; sequence GTETSKQSTEA. The span at 768 to 783 shows a compositional bias: basic and acidic residues; that stretch reads ELGKGPEKSEMHREPA. Composition is skewed to polar residues over residues 815 to 825 and 852 to 863; these read EFTTSSDSETA and TNYSLRFNCDQQ. Over residues 876–889 the composition is skewed to low complexity; the sequence is GDSADAGPPAAGSA. The span at 908–921 shows a compositional bias: basic and acidic residues; sequence QERKQAPSTRRDSA. Residues 956-967 are compositionally biased toward low complexity; it reads PLAQKPALAPKP. T971 carries the post-translational modification Phosphothreonine. A phosphoserine mark is found at S975 and S1017. The segment covering 994-1040 has biased composition (basic and acidic residues); that stretch reads GRPDPEPSEPSKEDQESSDRRPPSPPGPEERKGQKRDEEEEATERKP. The segment covering 1047-1057 has biased composition (polar residues); sequence ATQQEKPSQTP. Basic and acidic residues-rich tracts occupy residues 1059-1082 and 1099-1124; these read AGRK…TEKV and GFRE…KLSK. Over residues 1127–1139 the composition is skewed to low complexity; sequence VSVSVQPGSSSVS. The segment covering 1151–1170 has biased composition (basic and acidic residues); the sequence is PEEKRPETAVSRLERREQLK. A compositionally biased stretch (polar residues) spans 1174 to 1183; it reads TLPTSVTVEI.

As to quaternary structure, directly interacts with actin-capping proteins CAPZA1, CAPZA2 and CAPZB; this interaction decreases the binding of capping proteins to actin. As to expression, expressed in intestinal epithelial cells (at protein level).

The protein resides in the cytoplasm. Its subcellular location is the cytosol. In terms of biological role, involved in epithelial cell integrity by acting on the maintenance of the actin cytoskeleton. Positively regulates the actin polymerization, by inhibiting the interaction of actin-capping proteins with actin. In Homo sapiens (Human), this protein is Capping protein-inhibiting regulator of actin dynamics.